A 389-amino-acid chain; its full sequence is 26S proteasome regulatory subunit 10B (389 aa).

Residue Lys-72 is modified to N6-acetyllysine. 174–181 (GPPGTGKT) serves as a coordination point for ATP. Lys-206 is subject to N6-acetyllysine. At Ser-244 the chain carries Phosphoserine.

It belongs to the AAA ATPase family. In terms of assembly, component of the 19S proteasome regulatory particle complex. The 26S proteasome consists of a 20S core particle (CP) and two 19S regulatory subunits (RP). The regulatory particle is made of a lid composed of 9 subunits, a base containing 6 ATPases including PSMC6 and few additional components. Interacts with PAAF1.

It localises to the cytoplasm. The protein localises to the nucleus. Component of the 26S proteasome, a multiprotein complex involved in the ATP-dependent degradation of ubiquitinated proteins. This complex plays a key role in the maintenance of protein homeostasis by removing misfolded or damaged proteins, which could impair cellular functions, and by removing proteins whose functions are no longer required. Therefore, the proteasome participates in numerous cellular processes, including cell cycle progression, apoptosis, or DNA damage repair. PSMC6 belongs to the heterohexameric ring of AAA (ATPases associated with diverse cellular activities) proteins that unfolds ubiquitinated target proteins that are concurrently translocated into a proteolytic chamber and degraded into peptides. The sequence is that of 26S proteasome regulatory subunit 10B (PSMC6) from Bos taurus (Bovine).